Here is a 495-residue protein sequence, read N- to C-terminus: Beta-galactoside alpha-2,6-sialyltransferase 2 (495 aa).

At 1–10 the chain is on the cytoplasmic side; that stretch reads MKPHLKQWRQ. A helical; Signal-anchor for type II membrane protein membrane pass occupies residues 11–31; the sequence is GMLCGVFAWGLFFVVIFLYFT. Residues 32 to 495 lie on the Lumenal side of the membrane; it reads DSSPAKPAPS…LQAVRCPPGA (464 aa). Disordered stretches follow at residues 63 to 90 and 107 to 165; these read GASE…LRTW and GRTS…EDGE. Residues 134 to 143 show a composition bias toward low complexity; sequence PEGARPPRAA. Over residues 144-153 the composition is skewed to basic residues; the sequence is PGRRAKRGPR. Intrachain disulfides connect cysteine 225-cysteine 491, cysteine 268-cysteine 420, and cysteine 438-cysteine 449. N-linked (GlcNAc...) asparagine glycosylation is found at asparagine 279 and asparagine 309.

It belongs to the glycosyltransferase 29 family.

It is found in the golgi apparatus. Its subcellular location is the golgi stack membrane. It catalyses the reaction a beta-D-galactoside + CMP-N-acetyl-beta-neuraminate = an N-acetyl-alpha-neuraminyl-(2-&gt;6)-beta-D-galactosyl derivative + CMP + H(+). Transfers sialic acid from the donor of substrate CMP-sialic acid to galactose containing acceptor substrates. Has alpha-2,6-sialyltransferase activity toward oligosaccharides that have the Gal-beta-1,4-GlcNAc sequence at the non-reducing end of their carbohydrate groups, but it has weak or no activities toward glycoproteins and glycolipids. This Bos taurus (Bovine) protein is Beta-galactoside alpha-2,6-sialyltransferase 2 (ST6GAL2).